The chain runs to 606 residues: Glutamine--fructose-6-phosphate aminotransferase [isomerizing] (606 aa).

Cys2 functions as the Nucleophile; for GATase activity in the catalytic mechanism. In terms of domain architecture, Glutamine amidotransferase type-2 spans 2-217 (CGIIGIVGKE…EGDYVALDHD (216 aa)). 2 consecutive SIS domains span residues 280–421 (VPGD…ARGT) and 454–596 (IAAD…VDQP). Lys601 functions as the For Fru-6P isomerization activity in the catalytic mechanism.

Homodimer.

It localises to the cytoplasm. The catalysed reaction is D-fructose 6-phosphate + L-glutamine = D-glucosamine 6-phosphate + L-glutamate. Functionally, catalyzes the first step in hexosamine metabolism, converting fructose-6P into glucosamine-6P using glutamine as a nitrogen source. The polypeptide is Glutamine--fructose-6-phosphate aminotransferase [isomerizing] (Caulobacter vibrioides (strain ATCC 19089 / CIP 103742 / CB 15) (Caulobacter crescentus)).